The sequence spans 428 residues: Involucrin (428 aa).

2 disordered regions span residues 1–128 and 140–398; these read MSQQ…EEKK and KRDD…GQAQ. Positions 56–76 are enriched in basic and acidic residues; sequence PSKHEEKHVTIVKGVPEHECE. Residues 77-92 are compositionally biased toward low complexity; that stretch reads QQQQAQGQERQQQHWG. Basic and acidic residues-rich tracts occupy residues 107–117, 162–174, and 192–208; these read LKQEEAQREKQ, QLKH…KPLE, and QLKH…HLEQ. A compositionally biased stretch (low complexity) spans 209–218; that stretch reads QEGQLELPEQ. Basic and acidic residues predominate over residues 220–297; sequence DQPKHLEQLE…CEGQLEHLEQ (78 aa). Residues 298–311 show a composition bias toward low complexity; the sequence is QEGQLELPEQQVGQ. 3 stretches are compositionally biased toward basic and acidic residues: residues 313-327, 352-366, and 374-385; these read KHLE…HPEQ and QLKDLEQQERQL.

This sequence belongs to the involucrin family. Directly or indirectly cross-linked to cornifelin (CNFN). Substrate of transglutaminase. Specific glutamines or lysines are cross-linked to keratins, desmoplakin and to inter involucrin molecules. Keratinocytes of epidermis and other stratified squamous epithelia.

Its subcellular location is the cytoplasm. Its function is as follows. Part of the insoluble cornified cell envelope (CE) of stratified squamous epithelia. The sequence is that of Involucrin (IVL) from Cebus albifrons (White-fronted capuchin).